A 435-amino-acid chain; its full sequence is 3-phosphoshikimate 1-carboxyvinyltransferase (435 aa).

3 residues coordinate 3-phosphoshikimate: Lys-22, Ser-23, and Arg-27. Lys-22 is a phosphoenolpyruvate binding site. Phosphoenolpyruvate is bound by residues Gly-94 and Arg-122. Residues Ser-166, Gln-168, Asp-314, and Lys-341 each contribute to the 3-phosphoshikimate site. Gln-168 is a phosphoenolpyruvate binding site. The Proton acceptor role is filled by Asp-314. Phosphoenolpyruvate is bound by residues Arg-345 and Arg-388.

This sequence belongs to the EPSP synthase family. As to quaternary structure, monomer.

Its subcellular location is the cytoplasm. It catalyses the reaction 3-phosphoshikimate + phosphoenolpyruvate = 5-O-(1-carboxyvinyl)-3-phosphoshikimate + phosphate. It participates in metabolic intermediate biosynthesis; chorismate biosynthesis; chorismate from D-erythrose 4-phosphate and phosphoenolpyruvate: step 6/7. Its function is as follows. Catalyzes the transfer of the enolpyruvyl moiety of phosphoenolpyruvate (PEP) to the 5-hydroxyl of shikimate-3-phosphate (S3P) to produce enolpyruvyl shikimate-3-phosphate and inorganic phosphate. The chain is 3-phosphoshikimate 1-carboxyvinyltransferase from Ruthia magnifica subsp. Calyptogena magnifica.